A 425-amino-acid polypeptide reads, in one-letter code: Serine--tRNA ligase (425 aa).

An L-serine-binding site is contributed by 226 to 228 (TSE). Residues 257–259 (RRE) and Val273 contribute to the ATP site. L-serine is bound at residue Glu280. 344–347 (ELTS) serves as a coordination point for ATP. Thr382 lines the L-serine pocket.

It belongs to the class-II aminoacyl-tRNA synthetase family. Type-1 seryl-tRNA synthetase subfamily. Homodimer. The tRNA molecule binds across the dimer.

The protein resides in the cytoplasm. The catalysed reaction is tRNA(Ser) + L-serine + ATP = L-seryl-tRNA(Ser) + AMP + diphosphate + H(+). The enzyme catalyses tRNA(Sec) + L-serine + ATP = L-seryl-tRNA(Sec) + AMP + diphosphate + H(+). It functions in the pathway aminoacyl-tRNA biosynthesis; selenocysteinyl-tRNA(Sec) biosynthesis; L-seryl-tRNA(Sec) from L-serine and tRNA(Sec): step 1/1. Its function is as follows. Catalyzes the attachment of serine to tRNA(Ser). Is also able to aminoacylate tRNA(Sec) with serine, to form the misacylated tRNA L-seryl-tRNA(Sec), which will be further converted into selenocysteinyl-tRNA(Sec). The sequence is that of Serine--tRNA ligase from Mycobacterium avium (strain 104).